The chain runs to 481 residues: UDP-N-acetylmuramoylalanine--D-glutamate ligase (481 aa).

108–114 (GTNGKTS) contributes to the ATP binding site.

The protein belongs to the MurCDEF family.

The protein resides in the cytoplasm. It catalyses the reaction UDP-N-acetyl-alpha-D-muramoyl-L-alanine + D-glutamate + ATP = UDP-N-acetyl-alpha-D-muramoyl-L-alanyl-D-glutamate + ADP + phosphate + H(+). The protein operates within cell wall biogenesis; peptidoglycan biosynthesis. Cell wall formation. Catalyzes the addition of glutamate to the nucleotide precursor UDP-N-acetylmuramoyl-L-alanine (UMA). The protein is UDP-N-acetylmuramoylalanine--D-glutamate ligase of Bifidobacterium longum (strain DJO10A).